The primary structure comprises 496 residues: Probable cytosol aminopeptidase (496 aa).

Mn(2+)-binding residues include Lys-251 and Asp-256. The active site involves Lys-263. Mn(2+)-binding residues include Asp-274, Asp-333, and Glu-335. Residue Arg-337 is part of the active site.

This sequence belongs to the peptidase M17 family. Requires Mn(2+) as cofactor.

The protein resides in the cytoplasm. The catalysed reaction is Release of an N-terminal amino acid, Xaa-|-Yaa-, in which Xaa is preferably Leu, but may be other amino acids including Pro although not Arg or Lys, and Yaa may be Pro. Amino acid amides and methyl esters are also readily hydrolyzed, but rates on arylamides are exceedingly low.. It carries out the reaction Release of an N-terminal amino acid, preferentially leucine, but not glutamic or aspartic acids.. Its function is as follows. Presumably involved in the processing and regular turnover of intracellular proteins. Catalyzes the removal of unsubstituted N-terminal amino acids from various peptides. The chain is Probable cytosol aminopeptidase from Acidovorax ebreus (strain TPSY) (Diaphorobacter sp. (strain TPSY)).